The sequence spans 232 residues: Large ribosomal subunit protein uL1 (232 aa).

This sequence belongs to the universal ribosomal protein uL1 family. As to quaternary structure, part of the 50S ribosomal subunit.

In terms of biological role, binds directly to 23S rRNA. The L1 stalk is quite mobile in the ribosome, and is involved in E site tRNA release. Its function is as follows. Protein L1 is also a translational repressor protein, it controls the translation of the L11 operon by binding to its mRNA. The sequence is that of Large ribosomal subunit protein uL1 from Xylella fastidiosa (strain 9a5c).